Consider the following 249-residue polypeptide: Chitooligosaccharide deacetylase (249 aa).

Mg(2+) is bound by residues histidine 61 and histidine 125.

Belongs to the YdjC deacetylase family. ChbG subfamily. As to quaternary structure, homodimer. Requires Mg(2+) as cofactor.

The protein resides in the cytoplasm. It carries out the reaction N,N'-diacetylchitobiose + H2O = N-acetyl-beta-D-glucosaminyl-(1-&gt;4)-D-glucosamine + acetate. The enzyme catalyses diacetylchitobiose-6'-phosphate + H2O = N'-monoacetylchitobiose-6'-phosphate + acetate. The protein operates within glycan degradation; chitin degradation. Functionally, involved in the degradation of chitin. ChbG is essential for growth on the acetylated chitooligosaccharides chitobiose and chitotriose but is dispensable for growth on cellobiose and chitosan dimer, the deacetylated form of chitobiose. Deacetylation of chitobiose-6-P and chitotriose-6-P is necessary for both the activation of the chb promoter by the regulatory protein ChbR and the hydrolysis of phosphorylated beta-glucosides by the phospho-beta-glucosidase ChbF. Catalyzes the removal of only one acetyl group from chitobiose-6-P to yield monoacetylchitobiose-6-P, the inducer of ChbR and the substrate of ChbF. This chain is Chitooligosaccharide deacetylase, found in Escherichia coli O17:K52:H18 (strain UMN026 / ExPEC).